A 220-amino-acid chain; its full sequence is Aspartic protease inhibitor 4 (220 aa).

Residues M1 to T23 form the signal peptide. The propeptide occupies S24–S32. A Vacuolar targeting signal motif is present at residues N26–P31. An N-linked (GlcNAc...) asparagine glycan is attached at N51. Intrachain disulfides connect C80/C125 and C174/C185.

This sequence belongs to the protease inhibitor I3 (leguminous Kunitz-type inhibitor) family. In terms of tissue distribution, tubers.

Its subcellular location is the vacuole. In terms of biological role, inhibits tightly cathepsin D (aspartic protease) and weakly trypsin (serine protease). May protect the plant by inhibiting proteases of invading organisms. In Solanum tuberosum (Potato), this protein is Aspartic protease inhibitor 4.